Here is a 433-residue protein sequence, read N- to C-terminus: MDELLSMLNFLGMKDPEELFSDIPKSVRKKSIGIGGGLDEYRVIDRAMEIGRKNKTDMINFLGNGIYDRVIPEAVNYILSKPEFLDSYTPYQPEISQGMLQSMFEYQSLISDLMGMDVTNASMYDGYSALGEAARMAYRINGHSKILVPESSYDSKISVLRNYIWGLNMKIMKYRIGEDGMIDLDDLSSKIDSDTSAIVVENPNGYGILDKNIFGVKDIKKDAVLISYVDPISLGVVKPPGEYGSDIAVAEGQQLGIPMNFGGPLLGLMSFKMEHIRRSPGRIIGESIDSNGKRAYVMTLQTREQHIRRAKATSNICSNQALLTLAASAYLSIMGSTGLRKVALLTIKHSRMIKEKLSSIGVKPYFSTESFSDVMFRLERDVMEALASKNILGGLKLRQLISDTPMKDATFFTVTEKTDAAAIEKLAAALEVI.

The protein belongs to the GcvP family. N-terminal subunit subfamily. In terms of assembly, the glycine cleavage system is composed of four proteins: P, T, L and H. In this organism, the P 'protein' is a heterodimer of two subunits.

The catalysed reaction is N(6)-[(R)-lipoyl]-L-lysyl-[glycine-cleavage complex H protein] + glycine + H(+) = N(6)-[(R)-S(8)-aminomethyldihydrolipoyl]-L-lysyl-[glycine-cleavage complex H protein] + CO2. The glycine cleavage system catalyzes the degradation of glycine. The P protein binds the alpha-amino group of glycine through its pyridoxal phosphate cofactor; CO(2) is released and the remaining methylamine moiety is then transferred to the lipoamide cofactor of the H protein. In Thermoplasma acidophilum (strain ATCC 25905 / DSM 1728 / JCM 9062 / NBRC 15155 / AMRC-C165), this protein is Probable glycine dehydrogenase (decarboxylating) subunit 1.